The chain runs to 251 residues: Segregation and condensation protein A (251 aa).

It belongs to the ScpA family. Component of a cohesin-like complex composed of ScpA, ScpB and the Smc homodimer, in which ScpA and ScpB bind to the head domain of Smc. The presence of the three proteins is required for the association of the complex with DNA.

It is found in the cytoplasm. Functionally, participates in chromosomal partition during cell division. May act via the formation of a condensin-like complex containing Smc and ScpB that pull DNA away from mid-cell into both cell halves. The protein is Segregation and condensation protein A of Bacillus velezensis (strain DSM 23117 / BGSC 10A6 / LMG 26770 / FZB42) (Bacillus amyloliquefaciens subsp. plantarum).